A 419-amino-acid chain; its full sequence is Mitochondrial chaperone BCS1 (419 aa).

Residues 1–15 (MPLSDFVLALKDNPY) lie on the Mitochondrial intermembrane side of the membrane. A helical membrane pass occupies residues 16–32 (FGAGFGLVGVGTALALA). Residues 33–419 (RKGAQLGLVA…AIQNAESLRR (387 aa)) lie on the Mitochondrial matrix side of the membrane. Tyrosine 181 is subject to Phosphotyrosine. 230 to 237 (GPPGCGKS) contacts ATP.

Belongs to the AAA ATPase family. BCS1 subfamily. In terms of assembly, interacts with LETM1.

It localises to the mitochondrion inner membrane. The catalysed reaction is ATP + H2O = ADP + phosphate + H(+). In terms of biological role, chaperone necessary for the incorporation of Rieske iron-sulfur protein UQCRFS1 into the mitochondrial respiratory chain complex III. Plays an important role in the maintenance of mitochondrial tubular networks, respiratory chain assembly and formation of the LETM1 complex. The polypeptide is Mitochondrial chaperone BCS1 (BCS1L) (Bos taurus (Bovine)).